Here is a 212-residue protein sequence, read N- to C-terminus: Acyl-homoserine-lactone synthase (212 aa).

It belongs to the autoinducer synthase family.

It catalyses the reaction a fatty acyl-[ACP] + S-adenosyl-L-methionine = an N-acyl-L-homoserine lactone + S-methyl-5'-thioadenosine + holo-[ACP] + H(+). Required for the synthesis of OHHL (N-(3-oxohexanoyl)-L-homoserine lactone), an autoinducer molecule which binds to ExpR and thus acts in virulence (soft rot disease) through the activation of genes for plant tissue macerating enzymes. In Dickeya dadantii (strain 3937) (Erwinia chrysanthemi (strain 3937)), this protein is Acyl-homoserine-lactone synthase (expI).